Here is an 808-residue protein sequence, read N- to C-terminus: Homeobox-leucine zipper protein HDG1 (808 aa).

Residues 57 to 121 (LQTNGEMSRN…KRYHRHTPKQ (65 aa)) are disordered. A compositionally biased stretch (basic and acidic residues) spans 79 to 90 (SRGEDVESRSES). Over residues 108 to 119 (LKKKKRYHRHTP) the composition is skewed to basic residues. Positions 110 to 169 (KKKRYHRHTPKQIQDLESVFKECAHPDEKQRLDLSRRLNLDPRQVKFWFQNRRTQMKTQI) form a DNA-binding region, homeobox. Positions 158–233 (FQNRRTQMKT…SRLKDELDRV (76 aa)) form a coiled coil. One can recognise an START domain in the interval 310–541 (DFDQRSRYLD…LQRQCECLTI (232 aa)).

It belongs to the HD-ZIP homeobox family. Class IV subfamily. As to quaternary structure, interacts with CFL1. Binds with BBM. As to expression, expressed in trichomes forming at the base of young leaves, in endodermal cell lines around emergent lateral roots and in the epidermal layer of the stamen filament.

The protein resides in the nucleus. Functionally, probable transcription factor. Promotes cuticle development probably by modulating the expression of the downstream genes BDG and FDH, possibly repressed in a CFL1-dependent manner. Involved, together with PDF2, in the regulation of flower organs development by promoting the expression of APETALA 3 (AP3) in the epidermis and internal cell layers of developing flowers. In opposition to BBM, seems to promote cell differentiation and giant cell identity via transcriptional repression of meristem and cell proliferation genes. This is Homeobox-leucine zipper protein HDG1 from Arabidopsis thaliana (Mouse-ear cress).